The following is a 279-amino-acid chain: Putative pyruvate, phosphate dikinase regulatory protein (279 aa).

Position 153–160 (G153–T160) interacts with ADP.

The protein belongs to the pyruvate, phosphate/water dikinase regulatory protein family. PDRP subfamily.

It carries out the reaction N(tele)-phospho-L-histidyl/L-threonyl-[pyruvate, phosphate dikinase] + ADP = N(tele)-phospho-L-histidyl/O-phospho-L-threonyl-[pyruvate, phosphate dikinase] + AMP + H(+). It catalyses the reaction N(tele)-phospho-L-histidyl/O-phospho-L-threonyl-[pyruvate, phosphate dikinase] + phosphate + H(+) = N(tele)-phospho-L-histidyl/L-threonyl-[pyruvate, phosphate dikinase] + diphosphate. In terms of biological role, bifunctional serine/threonine kinase and phosphorylase involved in the regulation of the pyruvate, phosphate dikinase (PPDK) by catalyzing its phosphorylation/dephosphorylation. This Rhodopseudomonas palustris (strain BisB5) protein is Putative pyruvate, phosphate dikinase regulatory protein.